A 912-amino-acid polypeptide reads, in one-letter code: Glutamate receptor 3.2 (912 aa).

The N-terminal stretch at Met1–Gly22 is a signal peptide. Residues Ala23 to Thr587 lie on the Extracellular side of the membrane. Asn306, Asn338, Asn378, Asn417, Asn435, Asn445, and Asn532 each carry an N-linked (GlcNAc...) asparagine glycan. Glycine-binding positions include Asp544–Ala546 and Arg551. Residues Asp544 to Ala546 and Arg551 each bind L-methionine. Residues Pro588–Leu608 form a helical membrane-spanning segment. The Cytoplasmic portion of the chain corresponds to Glu609–Arg617. A helical transmembrane segment spans residues Gly618 to Ser638. The Cytoplasmic portion of the chain corresponds to His639–Arg649. Residues Ala650 to Leu670 form a helical membrane-spanning segment. Over Thr671 to Ser828 the chain is Extracellular. Tyr703 contributes to the glycine binding site. Tyr703 is a binding site for L-methionine. Asn734 is a glycosylation site (N-linked (GlcNAc...) asparagine). Glu743–Tyr746 serves as a coordination point for glycine. An L-methionine-binding site is contributed by Glu743–Tyr746. Cys755 and Cys809 are oxidised to a cystine. Residues Asn808 and Asn813 are each glycosylated (N-linked (GlcNAc...) asparagine). A helical transmembrane segment spans residues Phe829–Phe849. Residues Lys850–Ile912 lie on the Cytoplasmic side of the membrane. The tract at residues Lys888–Ile912 is disordered.

It belongs to the glutamate-gated ion channel (TC 1.A.10.1) family. Forms a heteromeric channel with GLR3.4. In terms of tissue distribution, expressed in leaves and siliques, and at lower level in flowers and roots. Detected in the vascular tissues of both shoots and roots. Expressed in root phloem.

The protein resides in the cell membrane. In terms of biological role, glutamate-gated receptor that probably acts as a non-selective cation channel. May be involved in light-signal transduction and calcium homeostasis via the regulation of calcium influx into cells. Could play a role in calcium unloading from the xylem vessels. Acts as a negative regulator of lateral root initiation and development. May restrict primordia numbers and position along the root axis by a signaling process originating in the phloem. The polypeptide is Glutamate receptor 3.2 (Arabidopsis thaliana (Mouse-ear cress)).